The following is a 209-amino-acid chain: CASP-like protein 2A2 (209 aa).

Residues 1–37 lie on the Cytoplasmic side of the membrane; that stretch reads MSKTAGVGRLGGARAADAAQQQQLAAGDAAVARAARP. Residues 38-58 form a helical membrane-spanning segment; that stretch reads IETLLRAAPLVLCVAAMTLML. Over 59-79 the chain is Extracellular; the sequence is RDQQSNEYGTVAYSDLGGFKY. A helical membrane pass occupies residues 80-100; that stretch reads LVYANGLCAAYSLASAFYTAV. The Cytoplasmic portion of the chain corresponds to 101-109; it reads PRPATVSRS. The chain crosses the membrane as a helical span at residues 110 to 130; the sequence is WVVFLLDQVFTYLILAAGAAA. The Extracellular segment spans residues 131 to 161; sequence AELLYLAYNGDKEVTWSEACGVFGSFCRQAR. The chain crosses the membrane as a helical span at residues 162–182; that stretch reads ISVAITFGAVLCFILLSLLSS. Residues 183-209 are Cytoplasmic-facing; sequence YRLFSAYEAPPPSALGSKGVEIAAYPR.

Belongs to the Casparian strip membrane proteins (CASP) family. As to quaternary structure, homodimer and heterodimers.

The protein resides in the cell membrane. The protein is CASP-like protein 2A2 of Zea mays (Maize).